The following is a 963-amino-acid chain: Pyruvate, phosphate dikinase 1, chloroplastic (963 aa).

Residues 1–76 (MLYIRKKMTS…GLHRETKARA (76 aa)) constitute a chloroplast transit peptide. Thr543 is subject to Phosphothreonine; by PDRP1. His545 acts as the Tele-phosphohistidine intermediate in catalysis. Positions 651, 707, 836, 857, 858, 859, and 860 each coordinate substrate. Glu836 contributes to the Mg(2+) binding site. Asp860 serves as a coordination point for Mg(2+). Cys922 (proton donor) is an active-site residue.

This sequence belongs to the PEP-utilizing enzyme family. In terms of assembly, homotetramer. Interacts with RP1 and RP2. It depends on Mg(2+) as a cofactor. Phosphorylation of Thr-543 in the dark inactivates the enzyme. Dephosphorylation upon light stimulation reactivates the enzyme. Isoform 1 is expressed in leaves, flowers and siliques. Isoform 2 is found in cotyledons, rosette and cauline leaves, petioles, flowers and siliques.

The protein localises to the plastid. It localises to the chloroplast. Its subcellular location is the cytoplasm. The enzyme catalyses pyruvate + phosphate + ATP = phosphoenolpyruvate + AMP + diphosphate + H(+). Activated by light-induced dephosphorylation. Inhibited by dark-induced phosphorylation. Both reactions are catalyzed by PDRP1. Its function is as follows. Formation of phosphoenolpyruvate. May be involved in regulating the flux of carbon into starch and fatty acids of seeds and in the remobilization of nitrogen reserves in senescing leaves. In Arabidopsis thaliana (Mouse-ear cress), this protein is Pyruvate, phosphate dikinase 1, chloroplastic (PPDK).